A 147-amino-acid polypeptide reads, in one-letter code: Large ribosomal subunit protein bL9 (147 aa).

This sequence belongs to the bacterial ribosomal protein bL9 family.

Functionally, binds to the 23S rRNA. This Clostridium botulinum (strain 657 / Type Ba4) protein is Large ribosomal subunit protein bL9.